Here is a 394-residue protein sequence, read N- to C-terminus: Aspergillopepsin-1 (394 aa).

A signal peptide spans 1–20 (MVVFSKTAALVLGLSSAVSA). A propeptide spans 21–69 (APAPTRKGFTINQIARPANKTRTINLPGMYARSLAKFGGTVPQSVKEAA) (activation peptide). Residues 85–391 (YLTPVTVGKS…NSEGPKLGFA (307 aa)) enclose the Peptidase A1 domain. Residues Asp-101 and Asp-283 contribute to the active site. Cysteines 319 and 354 form a disulfide.

The protein belongs to the peptidase A1 family. Monomer.

It is found in the secreted. It carries out the reaction Hydrolysis of proteins with broad specificity. Generally favors hydrophobic residues in P1 and P1', but also accepts Lys in P1, which leads to activation of trypsinogen. Does not clot milk.. Secreted aspartic endopeptidase that allows assimilation of proteinaceous substrates. The scissile peptide bond is attacked by a nucleophilic water molecule activated by two aspartic residues in the active site. Shows a broad primary substrate specificity. Favors hydrophobic residues at the P1 and P1' positions, but also accepts a lysine residue in the P1 position, leading to the activation of trypsinogen and chymotrypsinogen A. The protein is Aspergillopepsin-1 (pepA) of Aspergillus niger (strain ATCC MYA-4892 / CBS 513.88 / FGSC A1513).